The following is a 294-amino-acid chain: Methionine aminopeptidase (294 aa).

A substrate-binding site is contributed by His65. A divalent metal cation-binding residues include Asp85, Asp96, and His156. His164 is a binding site for substrate. A divalent metal cation is bound by residues Glu189 and Glu279.

Belongs to the peptidase M24A family. Methionine aminopeptidase archaeal type 2 subfamily. Monomer. Co(2+) is required as a cofactor. It depends on Zn(2+) as a cofactor. Mn(2+) serves as cofactor. Requires Fe(2+) as cofactor.

The catalysed reaction is Release of N-terminal amino acids, preferentially methionine, from peptides and arylamides.. Functionally, removes the N-terminal methionine from nascent proteins. The N-terminal methionine is often cleaved when the second residue in the primary sequence is small and uncharged (Met-Ala-, Cys, Gly, Pro, Ser, Thr, or Val). This Methanocaldococcus jannaschii (strain ATCC 43067 / DSM 2661 / JAL-1 / JCM 10045 / NBRC 100440) (Methanococcus jannaschii) protein is Methionine aminopeptidase.